Consider the following 893-residue polypeptide: ATPase family gene 2 protein homolog A (893 aa).

Residues 1–10 (MSSKKNRKRL) are compositionally biased toward basic residues. The disordered stretch occupies residues 1–26 (MSSKKNRKRLNQSAENGSSLPSAASS). The interval 1–237 (MSSKKNRKRL…SLELSLQLSQ (237 aa)) is required for interaction with AFG2B and CINP. The segment covering 11 to 25 (NQSAENGSSLPSAAS) has biased composition (polar residues). T272 carries the phosphothreonine modification. 2 positions are modified to phosphoserine: S274 and S279. Residues 394 to 401 (GPPGTGKT) and 668 to 675 (GPPGCSKT) contribute to the ATP site. K859 participates in a covalent cross-link: Glycyl lysine isopeptide (Lys-Gly) (interchain with G-Cter in SUMO2).

This sequence belongs to the AAA ATPase family. AFG2 subfamily. In terms of assembly, part of the 55LCC heterohexameric ATPase complex composed at least of AIRIM, AFG2A, AFG2B and CINP. Associates with pre-60S ribosomal particles.

The protein resides in the cytoplasm. It is found in the mitochondrion. Its subcellular location is the cytoskeleton. The protein localises to the spindle. It carries out the reaction ATP + H2O = ADP + phosphate + H(+). With respect to regulation, AFG2A alone display limited ATPase activity and is not regulated by RNA or DNA binding. In the context of 55LCC heterohexameric ATPase complex, the ATPase activity increases and is stimulated by DNA binding and inhibited in presence of RNA. Functionally, ATP-dependent chaperone part of the 55LCC heterohexameric ATPase complex which is chromatin-associated and promotes replisome proteostasis to maintain replication fork progression and genome stability. Required for replication fork progression, sister chromatid cohesion, and chromosome stability. The ATPase activity is specifically enhanced by replication fork DNA and is coupled to cysteine protease-dependent cleavage of replisome substrates in response to replication fork damage. Uses ATPase activity to process replisome substrates in S-phase, facilitating their proteolytic turnover from chromatin to ensure DNA replication and mitotic fidelity. Plays an essential role in the cytoplasmic maturation steps of pre-60S ribosomal particles by promoting the release of shuttling protein RSL24D1/RLP24 from the pre-ribosomal particles. May be involved in morphological and functional mitochondrial transformations during spermatogenesis. The sequence is that of ATPase family gene 2 protein homolog A from Homo sapiens (Human).